We begin with the raw amino-acid sequence, 353 residues long: Probable tRNA pseudouridine synthase B (353 aa).

Asp-45 functions as the Nucleophile in the catalytic mechanism. The 77-residue stretch at 211–287 (YPKIVAKKSA…DHIFVEAKHG (77 aa)) folds into the PUA domain. The segment at 292–353 (VRDREKDVQR…TGVHRRPGSH (62 aa)) is disordered. Over residues 309 to 328 (NIRDAAHGPDSRTGRGRKET) the composition is skewed to basic and acidic residues. Basic residues predominate over residues 336-353 (RVRKLQNKTGVHRRPGSH).

The protein belongs to the pseudouridine synthase TruB family. Type 2 subfamily.

The catalysed reaction is uridine(55) in tRNA = pseudouridine(55) in tRNA. Functionally, could be responsible for synthesis of pseudouridine from uracil-55 in the psi GC loop of transfer RNAs. The sequence is that of Probable tRNA pseudouridine synthase B from Thermoplasma volcanium (strain ATCC 51530 / DSM 4299 / JCM 9571 / NBRC 15438 / GSS1).